Here is a 512-residue protein sequence, read N- to C-terminus: Sucrose-6-phosphate hydrolase (512 aa).

Substrate-binding positions include 40 to 43, Q59, W67, 102 to 103, 165 to 166, E229, and W311; these read WMND, FS, and RD. D43 is a catalytic residue.

The protein belongs to the glycosyl hydrolase 32 family.

It is found in the cytoplasm. The catalysed reaction is Hydrolysis of terminal non-reducing beta-D-fructofuranoside residues in beta-D-fructofuranosides.. It functions in the pathway glycan biosynthesis; sucrose metabolism. The sequence is that of Sucrose-6-phosphate hydrolase (sacA) from Zymomonas mobilis subsp. mobilis (strain ATCC 10988 / DSM 424 / LMG 404 / NCIMB 8938 / NRRL B-806 / ZM1).